We begin with the raw amino-acid sequence, 154 residues long: Urease accessory protein UreE (154 aa).

The interval P134–D154 is disordered. Basic residues predominate over residues G143–D154.

This sequence belongs to the UreE family.

The protein localises to the cytoplasm. Involved in urease metallocenter assembly. Binds nickel. Probably functions as a nickel donor during metallocenter assembly. This chain is Urease accessory protein UreE, found in Alteromonas mediterranea (strain DSM 17117 / CIP 110805 / LMG 28347 / Deep ecotype).